Here is a 403-residue protein sequence, read N- to C-terminus: F-box only protein 22 (403 aa).

Met1 is subject to N-acetylmethionine. The 47-residue stretch at 21–67 (FVLSNLAEVVERVLTFLPAKALLRVACVCRLWRECVRRVLRTHRSVT) folds into the F-box domain. The residue at position 127 (Thr127) is a Phosphothreonine. Ser128 is subject to Phosphoserine. Lys194 carries the post-translational modification N6-acetyllysine.

Directly interacts with SKP1 and CUL1. Interacts (via C-terminal) with KDM4A. Interacts with TP53. Interacts with MTOR; this interaction promotes 'lys-27'-linked ubiquitination of MTOR. In terms of assembly, (Microbial infection) Interacts with SARS_COV-2 protein NSP5; this interaction attenuates NSP5-mediated inhibition of innate immunity. Phosphorylated by EIF2AK4 at Thr-127 causes cytoplasmic retention of FBXO22. Predominantly expressed in liver, also enriched in cardiac muscle.

Its subcellular location is the cytoplasm. It localises to the nucleus. The protein localises to the myofibril. The protein resides in the sarcomere. It is found in the z line. Substrate-recognition component of the SCF (SKP1-CUL1-F-box protein)-type E3 ubiquitin ligase complex that is implicated in the control of various cellular processes such as cell cycle control, transcriptional regulation, DNA damage repair, and apoptosis. Promotes the proteasome-dependent degradation of key sarcomeric proteins, such as alpha-actinin (ACTN2) and filamin-C (FLNC), essential for maintenance of normal contractile function. Acts as a key regulator of histone methylation marks namely H3K9 and H3K36 methylation through the regulation of histone demethylase KDM4A protein levels. In complex with KDM4A, also regulates the abundance of TP53 by targeting methylated TP53 for degradation at the late senescent stage. Under oxidative stress, promotes the ubiquitination and degradation of BACH1. Mechanistically, reactive oxygen species (ROS) covalently modify cysteine residues on the bZIP domain of BACH1, leading to its release from chromatin and making it accessible to FBXO22. Upon amino acid depletion, mediates 'Lys-27'-linked ubiquitination of MTOR and thereby inhibits substrate recruitment to mTORC1. Also inhibits SARS-CoV-2 replication by inducing NSP5 degradation. The polypeptide is F-box only protein 22 (FBXO22) (Homo sapiens (Human)).